Reading from the N-terminus, the 626-residue chain is uncharacterized protein (626 aa).

The chain crosses the membrane as a helical span at residues 103–123; it reads AGALLVKFFPLLLLYPLTYLA. The Protein kinase domain maps to 200-618; sequence FENREPVGSG…DILEAARPFL (419 aa). Residues 206 to 214 and K311 contribute to the ATP site; that span reads VGSGCVAQV. The active-site Proton acceptor is D445.

The protein belongs to the protein kinase superfamily. ADCK protein kinase family.

It is found in the mitochondrion. The protein resides in the membrane. Its function is as follows. The function of this protein is not yet clear. It is not known if it has protein kinase activity and what type of substrate it would phosphorylate (Ser, Thr or Tyr). Involved in the mitochondrial import of CoQ precursors, plays a role in muscle mitochondrial function and fatty acid beta-oxidation. This is an uncharacterized protein from Homo sapiens (Human).